The primary structure comprises 279 residues: Putative ABC transporter ATP-binding protein CA_C1368 (279 aa).

The region spanning 4–239 is the ABC transporter domain; sequence ISINNVDYIY…KKVLRNINLR (236 aa). Residue 37 to 44 coordinates ATP; it reads GPNGAGKS.

This sequence belongs to the ABC transporter superfamily.

It localises to the cell membrane. Functionally, probably part of an ABC transporter complex. Responsible for energy coupling to the transport system. The chain is Putative ABC transporter ATP-binding protein CA_C1368 from Clostridium acetobutylicum (strain ATCC 824 / DSM 792 / JCM 1419 / IAM 19013 / LMG 5710 / NBRC 13948 / NRRL B-527 / VKM B-1787 / 2291 / W).